A 678-amino-acid chain; its full sequence is RNA helicase NPH-II (678 aa).

One can recognise a Helicase ATP-binding domain in the interval 175 to 351 (FTSWARRVPV…EFFAESVFVH (177 aa)). ATP is bound at residue 188–195 (GDTGVGKT). The DEXH box motif lies at 300-303 (DEVH). One can recognise a Helicase C-terminal domain in the interval 371 to 546 (PLNRFMYIEE…VFDLQLPEDL (176 aa)).

The protein belongs to the DEAD box helicase family. DEAH subfamily. Monomer.

The protein resides in the virion. The catalysed reaction is ATP + H2O = ADP + phosphate + H(+). NTP-dependent helicase that catalyzes unidirectional unwinding of 3'tailed duplex RNAs and plays an important role during transcription of early mRNAs, presumably by preventing R-loop formation behind the elongating RNA polymerase. Might also play a role in the export of newly synthesized mRNA chains out of the core into the cytoplasm. Required for replication and propagation of viral particles. This is RNA helicase NPH-II (OPG084) from Oryctolagus cuniculus (Rabbit).